Consider the following 214-residue polypeptide: Octanoyltransferase (214 aa).

In terms of domain architecture, BPL/LPL catalytic spans 36–214; it reads GRESEMVWLL…QQKFDTIFLQ (179 aa). Substrate-binding positions include 75 to 82, 147 to 149, and 160 to 162; these read RGGKYSYH, AFG, and GFS. The active-site Acyl-thioester intermediate is the C178.

This sequence belongs to the LipB family.

The protein localises to the cytoplasm. It catalyses the reaction octanoyl-[ACP] + L-lysyl-[protein] = N(6)-octanoyl-L-lysyl-[protein] + holo-[ACP] + H(+). The protein operates within protein modification; protein lipoylation via endogenous pathway; protein N(6)-(lipoyl)lysine from octanoyl-[acyl-carrier-protein]: step 1/2. Catalyzes the transfer of endogenously produced octanoic acid from octanoyl-acyl-carrier-protein onto the lipoyl domains of lipoate-dependent enzymes. Lipoyl-ACP can also act as a substrate although octanoyl-ACP is likely to be the physiological substrate. This is Octanoyltransferase from Anaplasma marginale (strain Florida).